The following is a 358-amino-acid chain: Aminomethyltransferase (358 aa).

It belongs to the GcvT family. In terms of assembly, the glycine cleavage system is composed of four proteins: P, T, L and H.

The enzyme catalyses N(6)-[(R)-S(8)-aminomethyldihydrolipoyl]-L-lysyl-[protein] + (6S)-5,6,7,8-tetrahydrofolate = N(6)-[(R)-dihydrolipoyl]-L-lysyl-[protein] + (6R)-5,10-methylene-5,6,7,8-tetrahydrofolate + NH4(+). Functionally, the glycine cleavage system catalyzes the degradation of glycine. This Francisella philomiragia subsp. philomiragia (strain ATCC 25017 / CCUG 19701 / FSC 153 / O#319-036) protein is Aminomethyltransferase.